The following is a 188-amino-acid chain: Pallidipin (188 aa).

The first 18 residues, 1–18, serve as a signal peptide directing secretion; sequence MKVIIAATLLGILMHAFA. 3 cysteine pairs are disulfide-bonded: cysteine 21/cysteine 137, cysteine 55/cysteine 184, and cysteine 89/cysteine 105.

The protein belongs to the calycin superfamily. Triabin family. In terms of tissue distribution, expressed in salivary glands.

Its subcellular location is the secreted. Functionally, has been described as a specific inhibitor of collagen-induced platelet aggregation. However, as it does not affect platelet shape change or adhesion, it is plausible that it exerts its antiplatelet activity by a mechanism similar to that of triplatin, moubatin and dipetalodipin as scavenging eicosanoids involved in inflammation such as thromboxane A2 (TXA2). The protein is Pallidipin of Meccus pallidipennis (Triatomine bug).